Here is a 127-residue protein sequence, read N- to C-terminus: Small ribosomal subunit protein uS11 (127 aa).

It belongs to the universal ribosomal protein uS11 family. As to quaternary structure, part of the 30S ribosomal subunit. Interacts with proteins S7 and S18. Binds to IF-3.

Functionally, located on the platform of the 30S subunit, it bridges several disparate RNA helices of the 16S rRNA. Forms part of the Shine-Dalgarno cleft in the 70S ribosome. In Streptococcus agalactiae serotype Ia (strain ATCC 27591 / A909 / CDC SS700), this protein is Small ribosomal subunit protein uS11.